The following is a 427-amino-acid chain: MLGIVKMEGHETTDWSNYYQDAQEGYSSVPVSNMPQGLATMNTYMTMNPMSSGSNITSGSFNMPYGNSGLGAGLSPSGMSGMGSAGAMNGMGSGVPSMGSALSPSNMNAIQSAQQASMNSLSYSSMNSGMSPMGYGATNINRTRDSKTFRRSYPHAKPPYSYISLITMAIQQAPSKMLTLSEIYQWIMDLFPYYRQNQQRWQNSIRHSLSFNDCFIKVSRSPDKPGKGSYWTLHPDSGNMFENGCYLRRQKRFKCEKTQGGKGNQDGRKDHSGPSSPLHRVHGKSSQMDSSSSMSNPSSSPQALEHNGSNGEMKPQVAAGPSPLSSHQNHSTHSLAHETHIHLKGDPHYSFNHPFSINNLMSSSEQQHKLDFKAYEQALQQYSSYGGGLQGMPLGSPSMTGRGTIEPSALEPTYYQGVYSRPVLNTS.

The segment at residues 157 to 251 is a DNA-binding region (fork-head); the sequence is KPPYSYISLI…ENGCYLRRQK (95 aa). Residues 256-272 show a composition bias toward basic and acidic residues; it reads EKTQGGKGNQDGRKDHS. Residues 256 to 336 form a disordered region; sequence EKTQGGKGNQ…HQNHSTHSLA (81 aa). Low complexity predominate over residues 285 to 302; sequence SSQMDSSSSMSNPSSSPQ. Residues 323-334 show a composition bias toward polar residues; it reads PLSSHQNHSTHS.

In terms of tissue distribution, present in the vegetal pole and marginal zone but not the animal pole of gastrulae and in equal levels in the dorsal and ventral halves of both gastrulae and neurulae. At neurula stage, expressed in the notochord. During tailbud stages, expressed in the foregut, brain, hypocord, neural floor plate and in two lines of cells just dorsal and ventral to the notochord. Expressed in the adult liver.

The protein localises to the nucleus. Functionally, probable transcription factor. This chain is Forkhead box protein A1-B (foxa1-b), found in Xenopus laevis (African clawed frog).